We begin with the raw amino-acid sequence, 231 residues long: U1 small nuclear ribonucleoprotein C-1 (231 aa).

The Matrin-type zinc finger occupies 4 to 36 (YYCDYCDTYLTHDSPSVRKQHNAGYKHKANVRT). Composition is skewed to pro residues over residues 117–127 (APGIPGYPGGP), 134–159 (GAPP…PPGS), and 167–178 (LPRPPTLPPPTS). Positions 117–231 (APGIPGYPGG…SYAQPSEGNH (115 aa)) are disordered. The segment covering 181 to 193 (PGAPIPNSAAPPA) has biased composition (low complexity). Over residues 199–217 (PPAPAGPTSGAPPAPPTAP) the composition is skewed to pro residues.

This sequence belongs to the U1 small nuclear ribonucleoprotein C family. U1 snRNP is composed of the 7 core Sm proteins B/B', D1, D2, D3, E, F and G that assemble in a heptameric protein ring on the Sm site of the small nuclear RNA to form the core snRNP, and at least 3 U1 snRNP-specific proteins U1-70K, U1-A and U1-C. U1-C interacts with U1 snRNA and the 5' splice-site region of the pre-mRNA.

It localises to the nucleus. Component of the spliceosomal U1 snRNP, which is essential for recognition of the pre-mRNA 5' splice-site and the subsequent assembly of the spliceosome. U1-C is directly involved in initial 5' splice-site recognition for both constitutive and regulated alternative splicing. The interaction with the 5' splice-site seems to precede base-pairing between the pre-mRNA and the U1 snRNA. Stimulates commitment or early (E) complex formation by stabilizing the base pairing of the 5' end of the U1 snRNA and the 5' splice-site region. The sequence is that of U1 small nuclear ribonucleoprotein C-1 from Sorghum bicolor (Sorghum).